A 544-amino-acid polypeptide reads, in one-letter code: Chaperonin GroEL (544 aa).

Residues Thr30–Pro33, Lys51, Asp87–Thr91, Gly415, Asn479–Ala481, and Asp495 contribute to the ATP site. Low complexity predominate over residues Pro525–Met537. Positions Pro525–Met544 are disordered.

Belongs to the chaperonin (HSP60) family. Forms a cylinder of 14 subunits composed of two heptameric rings stacked back-to-back. Interacts with the co-chaperonin GroES.

It is found in the cytoplasm. The enzyme catalyses ATP + H2O + a folded polypeptide = ADP + phosphate + an unfolded polypeptide.. In terms of biological role, together with its co-chaperonin GroES, plays an essential role in assisting protein folding. The GroEL-GroES system forms a nano-cage that allows encapsulation of the non-native substrate proteins and provides a physical environment optimized to promote and accelerate protein folding. The sequence is that of Chaperonin GroEL from Ruthia magnifica subsp. Calyptogena magnifica.